The following is a 173-amino-acid chain: MNQASLSVDAITNLIEAFHHHHPAVRSAAVDELIKLGSITVNLLIAAYDDSQDQGFQAQIIQVLAQIGDAKALKLLAEVVGTSVANHCQGNVRRIAARGLGKIASTTSNTEIINNAQEKLIWALLTPEDWGLRYAAAVSLQEIATPKAKAALQQAIAQETDPVVRSRMAIALS.

It belongs to the CpcE/RpcE/PecE family.

Functionally, an enzyme involved in the biosynthesis of bilin. The protein is Bilin biosynthesis protein PecF (pecF) of Nostoc sp. (strain PCC 7120 / SAG 25.82 / UTEX 2576).